Reading from the N-terminus, the 530-residue chain is 3-oxo-5-alpha-steroid 4-dehydrogenase (530 aa).

FAD is bound at residue Asp-33–Arg-62. The chain crosses the membrane as a helical span at residues Ala-395 to Met-415.

Belongs to the FAD-dependent oxidoreductase 2 family. Requires FAD as cofactor.

Its subcellular location is the membrane. The enzyme catalyses a 3-oxo-5alpha-steroid + A = a 3-oxo-Delta(4)-steroid + AH2. The catalysed reaction is 5alpha-androstan-3,17-dione + A = androst-4-ene-3,17-dione + AH2. It carries out the reaction 5alpha-androst-1-ene-3,17-dione + A = androsta-1,4-diene-3,17-dione + AH2. With respect to regulation, inhibition occurs with substrate concentrations above 25 uM. In terms of biological role, involved in the degradation of steroids having an A:B ring fusion in a trans configuration. Catalyzes the elimination of hydrogens located at positions 4 and 5 and the introduction of double bonds into ring A. The chain is 3-oxo-5-alpha-steroid 4-dehydrogenase from Comamonas testosteroni (Pseudomonas testosteroni).